Here is a 775-residue protein sequence, read N- to C-terminus: MSVEEKARIGNSEEPIIIETGKYAKLTDGSVVVRQGGTAVLVTAVMSDEPITDVDFTPLAVDYRERASAYGRIPGGFTKREGKPTDREILVSRVIDRPIRPLFPEGFFHDVIITALTLSADDKYDPDVLAITGASAALHISRIPFEGPIAGVRVCRVNGEFVANPTYEQRKEADLDIVMAGTKDAIVMVEGGGKEIPEEVLADALFFGLDAIKEVIEAQERLREKVGKPKFEYQKVELPEDILKALEEECTPKILEAFNIKDKKERYSTLDKIVEEFIEAHQIPEELHFAVKYFYKKLESRLMREKVLKEGVRIDGRKPNEIRPIWIEVHPFERPHGNAIFTRGQTQAYVTVTLGTPDEALIIETIAEGEVFKRFMLHYSMPPFSVGEAKPWGPPRRREIGHGALAERAIEPLLPPEEEYPFIIRVVSDILESNGSTSMATVCGASLALFDAGVPMKDNKHVAGIAMGLILEKDRYVILSDILGDEDHLGDMDFKVAGTKDGITSVQMDIKVKGITKEIMLDALKQAREGRLYILEKMYEAIPEPRKEPHPYTPKVEVVDVPEEKAPLIIGPGGSTVKKIYDETGVKVWVGEQGKVYLFVFPGGDVEKAKQMIQDIVREVEVGAVYKGTITRVEPYGVFVELWPGKIGLLHVSKMAEPVRSATEKYKVGEEIIVKVLDLDELGRPRFTTIGIEDVGTEKKEVKPKVGDVYEGKVVRVEPYGAFIEYAPGKVGLLHVSKMKERVKDARQKYKVGDVVKVKVVEIDEQGRPKFTDDV.

Aspartate 487 and aspartate 493 together coordinate Mg(2+). The 60-residue stretch at 554–613 folds into the KH domain; sequence PKVEVVDVPEEKAPLIIGPGGSTVKKIYDETGVKVWVGEQGKVYLFVFPGGDVEKAKQMI. 2 consecutive S1 motif domains span residues 623 to 693 and 707 to 775; these read GAVY…IGIE and GDVY…TDDV.

This sequence belongs to the polyribonucleotide nucleotidyltransferase family. Mg(2+) is required as a cofactor.

The protein resides in the cytoplasm. It catalyses the reaction RNA(n+1) + phosphate = RNA(n) + a ribonucleoside 5'-diphosphate. Its function is as follows. Involved in mRNA degradation. Catalyzes the phosphorolysis of single-stranded polyribonucleotides processively in the 3'- to 5'-direction. The protein is Polyribonucleotide nucleotidyltransferase of Aquifex aeolicus (strain VF5).